Here is a 558-residue protein sequence, read N- to C-terminus: Formate--tetrahydrofolate ligase 2 (558 aa).

67–74 (TPAGEGKT) provides a ligand contact to ATP.

This sequence belongs to the formate--tetrahydrofolate ligase family.

The enzyme catalyses (6S)-5,6,7,8-tetrahydrofolate + formate + ATP = (6R)-10-formyltetrahydrofolate + ADP + phosphate. It participates in one-carbon metabolism; tetrahydrofolate interconversion. This Desulfitobacterium hafniense (strain Y51) protein is Formate--tetrahydrofolate ligase 2.